We begin with the raw amino-acid sequence, 192 residues long: Peptidyl-tRNA hydrolase (192 aa).

Tyrosine 17 serves as a coordination point for tRNA. Residue histidine 22 is the Proton acceptor of the active site. TRNA contacts are provided by phenylalanine 68, asparagine 70, and asparagine 116.

The protein belongs to the PTH family. In terms of assembly, monomer.

The protein resides in the cytoplasm. It carries out the reaction an N-acyl-L-alpha-aminoacyl-tRNA + H2O = an N-acyl-L-amino acid + a tRNA + H(+). Its function is as follows. Hydrolyzes ribosome-free peptidyl-tRNAs (with 1 or more amino acids incorporated), which drop off the ribosome during protein synthesis, or as a result of ribosome stalling. In terms of biological role, catalyzes the release of premature peptidyl moieties from peptidyl-tRNA molecules trapped in stalled 50S ribosomal subunits, and thus maintains levels of free tRNAs and 50S ribosomes. This Buchnera aphidicola subsp. Cinara cedri (strain Cc) protein is Peptidyl-tRNA hydrolase.